A 122-amino-acid polypeptide reads, in one-letter code: Large ribosomal subunit protein uL14 (122 aa).

Belongs to the universal ribosomal protein uL14 family. Part of the 50S ribosomal subunit. Forms a cluster with proteins L3 and L19. In the 70S ribosome, L14 and L19 interact and together make contacts with the 16S rRNA in bridges B5 and B8.

Binds to 23S rRNA. Forms part of two intersubunit bridges in the 70S ribosome. This Staphylococcus haemolyticus (strain JCSC1435) protein is Large ribosomal subunit protein uL14.